We begin with the raw amino-acid sequence, 1078 residues long: Disheveled-associated activator of morphogenesis 1 (1078 aa).

At Ser-34 the chain carries Phosphoserine. The GBD/FH3 domain maps to 45 to 420; that stretch reads LPMPPVEELD…QIVIQNDKGQ (376 aa). The stretch at 437–526 forms a coiled coil; that stretch reads RMLVNENEVK…ELSRRAVCAS (90 aa). Disordered regions lie at residues 456-480 and 524-585; these read RKEH…TQEK and CASI…PLGA. The region spanning 528–599 is the FH1 domain; that stretch reads PGGPSPGAPG…PGAPMGLALK (72 aa). 2 stretches are compositionally biased toward pro residues: residues 530 to 539 and 548 to 585; these read GPSPGAPGGP and LLPP…PLGA. In terms of domain architecture, FH2 spans 600 to 1009; the sequence is KKSIPQPTNA…EERRARMEAQ (410 aa). Residues 693-702 form an actin-binding region; it reads AQNCNILLSR. Positions 987–1027 are enriched in basic and acidic residues; it reads KQENENMRKKKEEEERRARMEAQLKEQRERERKMRKAKENS. Disordered stretches follow at residues 987-1034 and 1055-1078; these read KQEN…GEFD and RNRK…KLNF. A phosphoserine mark is found at Ser-1027 and Ser-1030. Positions 1027–1058 constitute a DAD domain; that stretch reads SEESGEFDDLVSALRSGEVFDKDLSKLKRNRK. Residues 1067–1078 show a composition bias toward basic and acidic residues; that stretch reads SSRERPITKLNF.

Belongs to the formin homology family. In terms of assembly, homodimer. Interacts with CIP4, FNBP1 and FNBP1L. Interacts with the SH3 domains of Abl, BTK, endophilin, spectrin and SRC. Binds specifically to GTP-bound CDC42 and RHOA. Interacts with INTU; INTU mediates the indirect interaction between DAAM1 and NPHP4. Interacts (via coiled coil domain) with KANK1 (via coiled coil domain). As to expression, expressed in all tissues examined.

The protein localises to the cytoplasm. It localises to the cytoskeleton. Its subcellular location is the cilium basal body. In terms of biological role, binds to disheveled (Dvl) and Rho, and mediates Wnt-induced Dvl-Rho complex formation. May play a role as a scaffolding protein to recruit Rho-GDP and Rho-GEF, thereby enhancing Rho-GTP formation. Can direct nucleation and elongation of new actin filaments. Involved in building functional cilia. Involved in the organization of the subapical actin network in multiciliated epithelial cells. Together with DAAM2, required for myocardial maturation and sarcomere assembly. During cell division, may regulate RHOA activation that signals spindle orientation and chromosomal segregation. This is Disheveled-associated activator of morphogenesis 1 (DAAM1) from Homo sapiens (Human).